The primary structure comprises 120 residues: Protein TCL1B4 (120 aa).

This sequence belongs to the TCL1 family.

The sequence is that of Protein TCL1B4 (Tcl1b4) from Mus musculus (Mouse).